Reading from the N-terminus, the 101-residue chain is UPF0473 protein LAF_0524 (101 aa).

The protein belongs to the UPF0473 family.

The chain is UPF0473 protein LAF_0524 from Limosilactobacillus fermentum (strain NBRC 3956 / LMG 18251) (Lactobacillus fermentum).